Consider the following 176-residue polypeptide: Inorganic pyrophosphatase (176 aa).

Substrate is bound by residues lysine 31, arginine 45, and tyrosine 57. Mg(2+) is bound by residues aspartate 67, aspartate 72, and aspartate 104. Tyrosine 142 is a binding site for substrate.

The protein belongs to the PPase family. In terms of assembly, homohexamer. Mg(2+) is required as a cofactor.

Its subcellular location is the cytoplasm. It catalyses the reaction diphosphate + H2O = 2 phosphate + H(+). Functionally, catalyzes the hydrolysis of inorganic pyrophosphate (PPi) forming two phosphate ions. The polypeptide is Inorganic pyrophosphatase (Haemophilus influenzae (strain ATCC 51907 / DSM 11121 / KW20 / Rd)).